A 337-amino-acid polypeptide reads, in one-letter code: Probable dihydroorotase (337 aa).

6 residues coordinate Zn(2+): His-12, His-14, Lys-95, His-132, His-170, and Asp-240. An N6-carboxylysine modification is found at Lys-95.

This sequence belongs to the metallo-dependent hydrolases superfamily. DHOase family. Class II DHOase subfamily. Zn(2+) serves as cofactor.

The enzyme catalyses (S)-dihydroorotate + H2O = N-carbamoyl-L-aspartate + H(+). Its pathway is pyrimidine metabolism; UMP biosynthesis via de novo pathway; (S)-dihydroorotate from bicarbonate: step 3/3. This chain is Probable dihydroorotase (ura2), found in Schizosaccharomyces pombe (strain 972 / ATCC 24843) (Fission yeast).